The sequence spans 525 residues: Mitochondrial-processing peptidase subunit alpha (525 aa).

The N-terminal 33 residues, 1 to 33 (MAAVVLAATRLLRGSGSWGCSRLRFGPPAYRRF), are a transit peptide targeting the mitochondrion. Lysine 64 is modified (N6-succinyllysine). N6-acetyllysine is present on lysine 299.

This sequence belongs to the peptidase M16 family. Heterodimer of PMPCA (alpha) and PMPCB (beta) subunits, forming the mitochondrial processing protease (MPP) in which PMPCA is involved in substrate recognition and binding and PMPCB is the catalytic subunit. In terms of tissue distribution, ubiquitously expressed with highest expression in fetal tissues and adult brain, cerebellum and cerebellar vermis.

The protein localises to the mitochondrion matrix. Its subcellular location is the mitochondrion inner membrane. Its function is as follows. Substrate recognition and binding subunit of the essential mitochondrial processing protease (MPP), which cleaves the mitochondrial sequence off newly imported precursors proteins. The protein is Mitochondrial-processing peptidase subunit alpha (PMPCA) of Homo sapiens (Human).